Consider the following 660-residue polypeptide: Leucine-rich repeat transmembrane protein FLRT2 (660 aa).

Positions 1–35 (MGLQTTKWPSHGAFFLKSWLIISLGLYSQVSKLLA) are cleaved as a signal peptide. Disulfide bonds link Cys36–Cys42 and Cys40–Cys49. The region spanning 36-63 (CPSVCRCDRNFVYCNERSLTSVPLGIPE) is the LRRNT domain. Residues 36–541 (CPSVCRCDRN…TTSHSMGSPF (506 aa)) lie on the Extracellular side of the membrane. LRR repeat units lie at residues 64–85 (GVTV…AELH), 89–109 (SVHT…NLPK), 110–131 (NVRV…ALAQ), 134–155 (KLEE…DGAF), 160–181 (SLKL…LPVD), 182–202 (LQEL…AFQN), 205–225 (SLER…AEGT), 231–252 (KLKE…LPGT), 253–274 (HLIR…AFSN), and 277–298 (KLER…VFDN). A glycan (N-linked (GlcNAc...) asparagine) is linked at Asn202. The N-linked (GlcNAc...) asparagine glycan is linked to Asn298. An LRRCT domain is found at 310-362 (NPWFCDCSIKWVTEWLKYIPSSLNVRGFMCQGPEQVRGMAVRELNMNLLSCPT). Cystine bridges form between Cys314–Cys339 and Cys316–Cys360. Residues 373–409 (APSTASPTTQPPTLSIPNPSRSYTPPTPTTSKLPTIP) are compositionally biased toward low complexity. The tract at residues 373–413 (APSTASPTTQPPTLSIPNPSRSYTPPTPTTSKLPTIPDWDG) is disordered. The Fibronectin type-III domain occupies 419 to 517 (PPISERIQLS…ICSEATTHAS (99 aa)). Asn433 and Asn521 each carry an N-linked (GlcNAc...) asparagine glycan. Residues 542–562 (LLAGLIGGAVIFVLVVLLSVF) traverse the membrane as a helical segment. Residues 563–660 (CWHMHKKGRY…SVPDLEHCHT (98 aa)) are Cytoplasmic-facing.

As to quaternary structure, self-associates (via leucine-rich repeats), giving rise to homooligomers. Interacts with FGFR1. Interacts with FGFR2. Interacts (via extracellular domain) with ADGRL1/LPHN1. Interacts (via extracellular domain) with ADGRL3 (via olfactomedin-like domain). Interacts (via extracellular domain) with UNC5D (via the first Ig-like domain). Can also interact (via extracellular domain) with UNC5B, but with much lower affinity. Interacts (via extracellular domain) with FN1. In terms of processing, N-glycosylated. Proteolytic cleavage in the juxtamembrane region gives rise to a soluble ectodomain. Cleavage is probably effected by a metalloprotease. In terms of tissue distribution, expressed in pancreas, skeletal muscle, brain, and heart.

The protein localises to the cell membrane. It is found in the endoplasmic reticulum membrane. The protein resides in the cell junction. It localises to the focal adhesion. Its subcellular location is the secreted. The protein localises to the extracellular space. It is found in the extracellular matrix. The protein resides in the microsome membrane. It localises to the synapse. Its subcellular location is the synaptosome. In terms of biological role, functions in cell-cell adhesion, cell migration and axon guidance. Mediates cell-cell adhesion via its interactions with ADGRL3 and probably also other latrophilins that are expressed at the surface of adjacent cells. May play a role in the migration of cortical neurons during brain development via its interaction with UNC5D. Mediates axon growth cone collapse and plays a repulsive role in neuron guidance via its interaction with UNC5D, and possibly also other UNC-5 family members. Plays a role in fibroblast growth factor-mediated signaling cascades. Required for normal organization of the cardiac basement membrane during embryogenesis, and for normal embryonic epicardium and heart morphogenesis. The sequence is that of Leucine-rich repeat transmembrane protein FLRT2 (FLRT2) from Homo sapiens (Human).